The following is a 384-amino-acid chain: Alpha-2B adrenergic receptor (384 aa).

Residues 1 to 25 traverse the membrane as a helical segment; sequence AIAAVITFLILFTIFGNALVILAVL. Residues 26 to 36 lie on the Cytoplasmic side of the membrane; the sequence is TSRSLRAPQNL. The helical transmembrane segment at 37–62 threads the bilayer; that stretch reads FLVSLAAADILVATLIIPFSLANELL. At 63–72 the chain is on the extracellular side; that stretch reads GYWYFRRTWC. Residues cysteine 72 and cysteine 151 are joined by a disulfide bond. Residues 73-95 form a helical membrane-spanning segment; it reads EVYLALDVLFCTSSIVHLCAISL. At 96 to 117 the chain is on the cytoplasmic side; sequence DRYWAVSRALQYNSKRTPRRIK. A helical membrane pass occupies residues 118–140; sequence CVILTVWLIAAAISLPPLIYKGD. The Extracellular portion of the chain corresponds to 141–156; that stretch reads QGPQPRGRPQCKLNQE. A helical transmembrane segment spans residues 157–180; it reads AWYILSSSIGSFFAPCLIMILVYL. Residues 181–348 lie on the Cytoplasmic side of the membrane; that stretch reads RIYLIAKRSN…LTREKRFTFV (168 aa). Positions 192-289 are disordered; the sequence is RGPRAKGAPR…PEEEEECGSP (98 aa). A compositionally biased stretch (polar residues) spans 218–229; the sequence is LANSPTLASSLA. Residues 240-249 are compositionally biased toward basic and acidic residues; the sequence is PPGEKERETP. A helical membrane pass occupies residues 349 to 372; the sequence is LAVVIGVFVLCWFPFFFSYSLGAI. Over 373-381 the chain is Extracellular; sequence CPQHCKVPH. Residues 382 to 384 traverse the membrane as a helical segment; it reads GLF.

Belongs to the G-protein coupled receptor 1 family. Adrenergic receptor subfamily. ADRA2B sub-subfamily. In terms of assembly, interacts with RAB26. Interacts with PPP1R9B. Interacts with GGA1, GGA2 and GGA3.

Its subcellular location is the cell membrane. Alpha-2 adrenergic receptors mediate the catecholamine-induced inhibition of adenylate cyclase through the action of G proteins. The sequence is that of Alpha-2B adrenergic receptor (ADRA2B) from Elephas maximus (Indian elephant).